Here is a 163-residue protein sequence, read N- to C-terminus: Ribonuclease P protein component (163 aa).

The segment at M1–D68 is disordered. Over residues T8–L19 the composition is skewed to polar residues.

This sequence belongs to the RnpA family. Consists of a catalytic RNA component (M1 or rnpB) and a protein subunit.

The enzyme catalyses Endonucleolytic cleavage of RNA, removing 5'-extranucleotides from tRNA precursor.. Its function is as follows. RNaseP catalyzes the removal of the 5'-leader sequence from pre-tRNA to produce the mature 5'-terminus. It can also cleave other RNA substrates such as 4.5S RNA. The protein component plays an auxiliary but essential role in vivo by binding to the 5'-leader sequence and broadening the substrate specificity of the ribozyme. The protein is Ribonuclease P protein component of Thermus thermophilus (strain ATCC BAA-163 / DSM 7039 / HB27).